The sequence spans 240 residues: Enolase-phosphatase E1 (240 aa).

It belongs to the HAD-like hydrolase superfamily. MasA/MtnC family. In terms of assembly, monomer. Mg(2+) serves as cofactor.

The enzyme catalyses 5-methylsulfanyl-2,3-dioxopentyl phosphate + H2O = 1,2-dihydroxy-5-(methylsulfanyl)pent-1-en-3-one + phosphate. Its pathway is amino-acid biosynthesis; L-methionine biosynthesis via salvage pathway; L-methionine from S-methyl-5-thio-alpha-D-ribose 1-phosphate: step 3/6. The protein operates within amino-acid biosynthesis; L-methionine biosynthesis via salvage pathway; L-methionine from S-methyl-5-thio-alpha-D-ribose 1-phosphate: step 4/6. Its function is as follows. Bifunctional enzyme that catalyzes the enolization of 2,3-diketo-5-methylthiopentyl-1-phosphate (DK-MTP-1-P) into the intermediate 2-hydroxy-3-keto-5-methylthiopentenyl-1-phosphate (HK-MTPenyl-1-P), which is then dephosphorylated to form the acireductone 1,2-dihydroxy-3-keto-5-methylthiopentene (DHK-MTPene). In Saccharopolyspora erythraea (strain ATCC 11635 / DSM 40517 / JCM 4748 / NBRC 13426 / NCIMB 8594 / NRRL 2338), this protein is Enolase-phosphatase E1.